The sequence spans 250 residues: Cellulose biosynthesis protein BcsQ (250 aa).

9–16 (VRGGVGTT) is an ATP binding site.

Belongs to the BcsQ family.

It localises to the cytoplasm. Its function is as follows. Essential for cellulose biosynthesis, shown for strain 1094, a commensal, natural cellulose producer. Also shown in strain W3110 which has a restored reading frame (TAG stop codon to TTG for amino acid 6, called strain AR3110), this protein. May play a role in subcellular localization of an active cellulose biosynthesis apparatus at the bacterial cell pole. The combination of cellulose and the curli fiber network confer cohesion, elasticity and tissue-like properties to colonies. In Escherichia coli (strain K12), this protein is Cellulose biosynthesis protein BcsQ.